Here is a 321-residue protein sequence, read N- to C-terminus: Glucokinase (321 aa).

ATP is bound at residue 8–13; sequence GDVGGT.

This sequence belongs to the bacterial glucokinase family.

The protein localises to the cytoplasm. It carries out the reaction D-glucose + ATP = D-glucose 6-phosphate + ADP + H(+). The sequence is that of Glucokinase from Salmonella heidelberg (strain SL476).